The following is a 100-amino-acid chain: Small ribosomal subunit protein uS14c (100 aa).

This sequence belongs to the universal ribosomal protein uS14 family. Part of the 30S ribosomal subunit.

The protein localises to the plastid. It is found in the chloroplast. In terms of biological role, binds 16S rRNA, required for the assembly of 30S particles. In Chlorella vulgaris (Green alga), this protein is Small ribosomal subunit protein uS14c.